Here is a 107-residue protein sequence, read N- to C-terminus: Phosphoribosyl-ATP pyrophosphatase (107 aa).

It belongs to the PRA-PH family.

The protein resides in the cytoplasm. The catalysed reaction is 1-(5-phospho-beta-D-ribosyl)-ATP + H2O = 1-(5-phospho-beta-D-ribosyl)-5'-AMP + diphosphate + H(+). It functions in the pathway amino-acid biosynthesis; L-histidine biosynthesis; L-histidine from 5-phospho-alpha-D-ribose 1-diphosphate: step 2/9. In Caulobacter sp. (strain K31), this protein is Phosphoribosyl-ATP pyrophosphatase.